Here is a 92-residue protein sequence, read N- to C-terminus: DNA/RNA-binding protein Alba (92 aa).

K11 carries the post-translational modification N6-acetyllysine.

The protein belongs to the histone-like Alba family. Acetylated. Acetylation at Lys-11 decreases DNA-binding affinity.

The protein resides in the cytoplasm. It is found in the chromosome. Its function is as follows. Binds double-stranded DNA tightly but without sequence specificity. Involved in DNA compaction. The polypeptide is DNA/RNA-binding protein Alba (Pyrobaculum calidifontis (strain DSM 21063 / JCM 11548 / VA1)).